Consider the following 58-residue polypeptide: MARKRRKGGEGLVTAIGLVRFYEEVEEKIKVPPEAVIGAAFALSIMTIALDLLLKAAR.

The Cytoplasmic segment spans residues 1 to 32; that stretch reads MARKRRKGGEGLVTAIGLVRFYEEVEEKIKVP. A helical membrane pass occupies residues 33-54; the sequence is PEAVIGAAFALSIMTIALDLLL. Residues 55–58 are Extracellular-facing; the sequence is KAAR.

The protein belongs to the SEC61-beta family. Component of the protein translocase complex. Heterotrimer consisting of alpha (SecY), beta (SecG) and gamma (SecE) subunits. Can form oligomers of the heterotrimer.

Its subcellular location is the cell membrane. Functionally, involved in protein export. The function of the beta subunit is unknown, but it may be involved in stabilization of the trimeric complex. This Ignicoccus hospitalis (strain KIN4/I / DSM 18386 / JCM 14125) protein is Preprotein translocase subunit SecG.